The sequence spans 440 residues: tRNA(Ile)-lysidine synthase (440 aa).

19–24 contacts ATP; the sequence is SGGLDS.

This sequence belongs to the tRNA(Ile)-lysidine synthase family.

It is found in the cytoplasm. The enzyme catalyses cytidine(34) in tRNA(Ile2) + L-lysine + ATP = lysidine(34) in tRNA(Ile2) + AMP + diphosphate + H(+). Its function is as follows. Ligates lysine onto the cytidine present at position 34 of the AUA codon-specific tRNA(Ile) that contains the anticodon CAU, in an ATP-dependent manner. Cytidine is converted to lysidine, thus changing the amino acid specificity of the tRNA from methionine to isoleucine. This Buchnera aphidicola subsp. Acyrthosiphon pisum (strain APS) (Acyrthosiphon pisum symbiotic bacterium) protein is tRNA(Ile)-lysidine synthase.